A 264-amino-acid chain; its full sequence is 4-hydroxy-tetrahydrodipicolinate reductase (264 aa).

Residue Gly8–Met13 participates in NAD(+) binding. NADP(+) is bound at residue Lys36. NAD(+) contacts are provided by residues Gly97 to Thr99 and Ala123 to Phe126. His153 acts as the Proton donor/acceptor in catalysis. (S)-2,3,4,5-tetrahydrodipicolinate is bound at residue His154. The Proton donor role is filled by Lys157. Position 163–164 (Gly163–Thr164) interacts with (S)-2,3,4,5-tetrahydrodipicolinate.

Belongs to the DapB family.

It is found in the cytoplasm. It carries out the reaction (S)-2,3,4,5-tetrahydrodipicolinate + NAD(+) + H2O = (2S,4S)-4-hydroxy-2,3,4,5-tetrahydrodipicolinate + NADH + H(+). The enzyme catalyses (S)-2,3,4,5-tetrahydrodipicolinate + NADP(+) + H2O = (2S,4S)-4-hydroxy-2,3,4,5-tetrahydrodipicolinate + NADPH + H(+). It participates in amino-acid biosynthesis; L-lysine biosynthesis via DAP pathway; (S)-tetrahydrodipicolinate from L-aspartate: step 4/4. Catalyzes the conversion of 4-hydroxy-tetrahydrodipicolinate (HTPA) to tetrahydrodipicolinate. This chain is 4-hydroxy-tetrahydrodipicolinate reductase, found in Shouchella clausii (strain KSM-K16) (Alkalihalobacillus clausii).